We begin with the raw amino-acid sequence, 195 residues long: Protein GrpE (195 aa).

Residues 1–24 (MSSKEQNTPDEQVSQESEMEQGQQ) are compositionally biased toward polar residues. Residues 1–40 (MSSKEQNTPDEQVSQESEMEQGQQAEAAPETVDVVDPRDE) form a disordered region.

The protein belongs to the GrpE family. Homodimer.

It is found in the cytoplasm. In terms of biological role, participates actively in the response to hyperosmotic and heat shock by preventing the aggregation of stress-denatured proteins, in association with DnaK and GrpE. It is the nucleotide exchange factor for DnaK and may function as a thermosensor. Unfolded proteins bind initially to DnaJ; upon interaction with the DnaJ-bound protein, DnaK hydrolyzes its bound ATP, resulting in the formation of a stable complex. GrpE releases ADP from DnaK; ATP binding to DnaK triggers the release of the substrate protein, thus completing the reaction cycle. Several rounds of ATP-dependent interactions between DnaJ, DnaK and GrpE are required for fully efficient folding. The polypeptide is Protein GrpE (Sodalis glossinidius (strain morsitans)).